Reading from the N-terminus, the 424-residue chain is UDP-N-acetylglucosamine 1-carboxyvinyltransferase (424 aa).

Phosphoenolpyruvate is bound at residue 22–23 (KN). R93 is a binding site for UDP-N-acetyl-alpha-D-glucosamine. C117 functions as the Proton donor in the catalytic mechanism. C117 carries the post-translational modification 2-(S-cysteinyl)pyruvic acid O-phosphothioketal. Residues 122–126 (RPVDL), 162–165 (KVSV), D307, and I329 each bind UDP-N-acetyl-alpha-D-glucosamine.

This sequence belongs to the EPSP synthase family. MurA subfamily.

It is found in the cytoplasm. The catalysed reaction is phosphoenolpyruvate + UDP-N-acetyl-alpha-D-glucosamine = UDP-N-acetyl-3-O-(1-carboxyvinyl)-alpha-D-glucosamine + phosphate. Its pathway is cell wall biogenesis; peptidoglycan biosynthesis. In terms of biological role, cell wall formation. Adds enolpyruvyl to UDP-N-acetylglucosamine. The chain is UDP-N-acetylglucosamine 1-carboxyvinyltransferase from Haemophilus influenzae (strain PittGG).